We begin with the raw amino-acid sequence, 782 residues long: ATP-dependent 6-phosphofructokinase, muscle type (782 aa).

Residue threonine 2 is modified to N-acetylthreonine. An N-terminal catalytic PFK domain 1 region spans residues 2–390; sequence THEEHHAAKT…NWEVYKLLAH (389 aa). ATP is bound by residues glycine 25, 88–89, and 118–121; these read RC and GDGS. Residue aspartate 119 participates in Mg(2+) binding. The residue at position 133 (serine 133) is a Phosphoserine. Substrate is bound by residues 164 to 166, arginine 201, 208 to 210, glutamate 264, arginine 292, and 298 to 301; these read SID, MGR, and HVQR. Aspartate 166 (proton acceptor) is an active-site residue. Serine 377 is modified (phosphoserine). The tract at residues 391–403 is interdomain linker; sequence IRPPVSKTSATMH. A C-terminal regulatory PFK domain 2 region spans residues 404-782; that stretch reads TVAVMNVGAP…SRKRSGETSI (379 aa). Beta-D-fructose 2,6-bisphosphate contacts are provided by residues arginine 473 and 530–534; that span reads TVSNN. Serine 532 is a glycosylation site (O-linked (GlcNAc) serine). Position 559 is an N6-(2-hydroxyisobutyryl)lysine (lysine 559). Beta-D-fructose 2,6-bisphosphate is bound by residues arginine 568, 575-577, glutamate 631, arginine 657, and 663-666; these read MGG and HMQQ. Serine 669 carries the phosphoserine modification. Arginine 737 is a beta-D-fructose 2,6-bisphosphate binding site. A Phosphoserine modification is found at serine 777.

The protein belongs to the phosphofructokinase type A (PFKA) family. ATP-dependent PFK group I subfamily. Eukaryotic two domain clade 'E' sub-subfamily. As to quaternary structure, homo- and heterotetramers. Phosphofructokinase (PFK) enzyme functions as a tetramer composed of different combinations of 3 types of subunits, called PFKM (M), PFKL (L) and PFKP (P). The composition of the PFK tetramer differs according to the tissue type it is present in. The kinetic and regulatory properties of the tetrameric enzyme are dependent on the subunit composition, hence can vary across tissues. Interacts (via C-terminus) with HK1 (via N-terminal spermatogenic cell-specific region). Mg(2+) serves as cofactor. GlcNAcylation decreases enzyme activity.

It is found in the cytoplasm. The catalysed reaction is beta-D-fructose 6-phosphate + ATP = beta-D-fructose 1,6-bisphosphate + ADP + H(+). It participates in carbohydrate degradation; glycolysis; D-glyceraldehyde 3-phosphate and glycerone phosphate from D-glucose: step 3/4. Its activity is regulated as follows. Allosterically activated by ADP, AMP, or fructose 2,6-bisphosphate, and allosterically inhibited by ATP or citrate. Functionally, catalyzes the phosphorylation of D-fructose 6-phosphate to fructose 1,6-bisphosphate by ATP, the first committing step of glycolysis. The chain is ATP-dependent 6-phosphofructokinase, muscle type (PFKM) from Canis lupus familiaris (Dog).